The primary structure comprises 292 residues: 33 kDa chaperonin (292 aa).

Disulfide bonds link cysteine 230–cysteine 232 and cysteine 263–cysteine 266.

This sequence belongs to the HSP33 family. Post-translationally, under oxidizing conditions two disulfide bonds are formed involving the reactive cysteines. Under reducing conditions zinc is bound to the reactive cysteines and the protein is inactive.

It is found in the cytoplasm. In terms of biological role, redox regulated molecular chaperone. Protects both thermally unfolding and oxidatively damaged proteins from irreversible aggregation. Plays an important role in the bacterial defense system toward oxidative stress. This chain is 33 kDa chaperonin, found in Sodalis glossinidius (strain morsitans).